The primary structure comprises 159 residues: Succinate dehydrogenase [ubiquinone] cytochrome b small subunit, mitochondrial (159 aa).

A mitochondrion-targeting transit peptide spans 1–30 (MLQTRLGLGALRQGRLLFAVKSFSTTSVAK). The Mitochondrial matrix segment spans residues 31–65 (IFPPPPQTIKGTVNDAAVFPHHSKLHGSYHWDFER). Residues 66 to 82 (IIAIAMVPQVMIPLFTG) form a helical membrane-spanning segment. Topologically, residues 83–89 (TSHPLMD) are mitochondrial intermembrane. The chain crosses the membrane as a helical span at residues 90–109 (AALACTLITHAHLGFESCVI). H99 serves as a coordination point for heme. Over 110–122 (DYFPARRFKKLSP) the chain is Mitochondrial matrix. Y111 contacts a ubiquinone. The helical transmembrane segment at 123–140 (LMHWILRGCTVLTLIGVY) threads the bilayer. The Mitochondrial intermembrane segment spans residues 141–159 (EFNTNDIGLTEGIKKLWKS).

It belongs to the CybS family. Forms part of complex II containing four subunits: a flavoprotein (FP), an iron-sulfur protein (IP) and a cytochrome b composed of a large and a small subunit.

The protein resides in the mitochondrion inner membrane. The protein operates within carbohydrate metabolism; tricarboxylic acid cycle. Membrane-anchoring subunit of succinate dehydrogenase (SDH) that is involved in complex II of the mitochondrial electron transport chain and is responsible for transferring electrons from succinate to ubiquinone (coenzyme Q). The chain is Succinate dehydrogenase [ubiquinone] cytochrome b small subunit, mitochondrial (sdh4) from Schizosaccharomyces pombe (strain 972 / ATCC 24843) (Fission yeast).